The primary structure comprises 335 residues: Glutamyl-tRNA reductase (335 aa).

Substrate is bound by residues 60 to 63 (TCHR), Ser110, 115 to 117 (ETE), and Gln121. Cys61 serves as the catalytic Nucleophile. 189 to 194 (GYSEIN) contributes to the NADP(+) binding site.

It belongs to the glutamyl-tRNA reductase family. As to quaternary structure, homodimer.

It catalyses the reaction (S)-4-amino-5-oxopentanoate + tRNA(Glu) + NADP(+) = L-glutamyl-tRNA(Glu) + NADPH + H(+). Its pathway is porphyrin-containing compound metabolism; protoporphyrin-IX biosynthesis; 5-aminolevulinate from L-glutamyl-tRNA(Glu): step 1/2. Functionally, catalyzes the NADPH-dependent reduction of glutamyl-tRNA(Glu) to glutamate 1-semialdehyde (GSA). The protein is Glutamyl-tRNA reductase of Chlamydia trachomatis serovar L2 (strain ATCC VR-902B / DSM 19102 / 434/Bu).